The sequence spans 713 residues: Calpastatin (713 aa).

Positions 1–21 (MSRPGPKPAASSRPRRGAAAS) are enriched in low complexity. The tract at residues 1 to 152 (MSRPGPKPAA…SADGESVAGG (152 aa)) is disordered. Positions 47–64 (VTASSAATGTSPRMSTTG) are enriched in polar residues. S57 bears the Phosphoserine mark. Residue K69 forms a Glycyl lysine isopeptide (Lys-Gly) (interchain with G-Cter in SUMO2) linkage. Position 86 is an N6-acetyllysine (K86). Over residues 120–129 (SRSNEQIVSE) the composition is skewed to polar residues. Phosphoserine is present on residues S122 and S171. The residue at position 173 (T173) is a Phosphothreonine. The Inhibitory domain 1 repeat unit spans residues 208-260 (TNKDDPPYTGPVVLDPMDSTYLEALGIKEGTIPPEYRKLLEKNEAITGPLPDS). The disordered stretch occupies residues 253–402 (ITGPLPDSPK…PEETSKCLSE (150 aa)). Phosphoserine is present on residues S260 and S281. Polar residues-rich tracts occupy residues 275-285 (SDFTCSSPTGK), 294-304 (GESSKAQSAGV), and 326-346 (QALQ…QSHL). The Inhibitory domain 2 repeat unit spans residues 341–393 (DPQSHLRQAKQVKEAKAKEERQEKCGEDEDTVPAEYRLKPAKDKDGKPLLPEP). Basic and acidic residues-rich tracts occupy residues 351–365 (QVKE…QEKC) and 376–387 (YRLKPAKDKDGK). S401, S403, S410, and S445 each carry phosphoserine. A disordered region spans residues 442–507 (LARSLGTRKE…PLLPKEAEEQ (66 aa)). Basic and acidic residues predominate over residues 448–505 (TRKEDPEDEKSLVDKVKEKAKEEDHEKLGEKEETIPPDYRLEIVKDKDGKPLLPKEAE). One copy of the Inhibitory domain 3 repeat lies at 451–504 (EDPEDEKSLVDKVKEKAKEEDHEKLGEKEETIPPDYRLEIVKDKDGKPLLPKEA). A phosphoserine mark is found at S521 and S532. A compositionally biased stretch (polar residues) spans 544 to 558 (VSETVSQVPAPSNHT). The disordered stretch occupies residues 544-713 (VSETVSQVPA…PKPKVDEDAT (170 aa)). A phosphoserine mark is found at S580 and S582. The Inhibitory domain 4 repeat unit spans residues 588 to 641 (PDPDENKPLDDKVKEKIKAEHSEKLGERDDTIPPEYRHLLDNDGKDKPEKPLTK). Basic and acidic residues-rich tracts occupy residues 588-648 (PDPD…KLGQ) and 687-713 (SKNE…EDAT).

This sequence belongs to the protease inhibitor I27 (calpastatin) family.

Its function is as follows. Specific inhibition of calpain (calcium-dependent cysteine protease). Plays a key role in postmortem tenderization of meat and have been proposed to be involved in muscle protein degradation in living tissue. This chain is Calpastatin (Cast), found in Rattus norvegicus (Rat).